Here is a 323-residue protein sequence, read N- to C-terminus: Biotin synthase (323 aa).

Residues 46-264 enclose the Radical SAM core domain; the sequence is TEIQLSSLLS…IAVARITMPR (219 aa). Positions 61, 65, and 68 each coordinate [4Fe-4S] cluster. [2Fe-2S] cluster is bound by residues cysteine 105, cysteine 136, cysteine 196, and arginine 268.

This sequence belongs to the radical SAM superfamily. Biotin synthase family. As to quaternary structure, homodimer. Requires [4Fe-4S] cluster as cofactor. The cofactor is [2Fe-2S] cluster.

It catalyses the reaction (4R,5S)-dethiobiotin + (sulfur carrier)-SH + 2 reduced [2Fe-2S]-[ferredoxin] + 2 S-adenosyl-L-methionine = (sulfur carrier)-H + biotin + 2 5'-deoxyadenosine + 2 L-methionine + 2 oxidized [2Fe-2S]-[ferredoxin]. Its pathway is cofactor biosynthesis; biotin biosynthesis; biotin from 7,8-diaminononanoate: step 2/2. Its function is as follows. Catalyzes the conversion of dethiobiotin (DTB) to biotin by the insertion of a sulfur atom into dethiobiotin via a radical-based mechanism. The sequence is that of Biotin synthase from Bordetella avium (strain 197N).